Reading from the N-terminus, the 320-residue chain is Ferrochelatase (320 aa).

Fe cation-binding residues include H194 and E275.

It belongs to the ferrochelatase family. In terms of assembly, monomer.

It localises to the cytoplasm. It catalyses the reaction heme b + 2 H(+) = protoporphyrin IX + Fe(2+). Its pathway is porphyrin-containing compound metabolism; protoheme biosynthesis; protoheme from protoporphyrin-IX: step 1/1. Functionally, catalyzes the ferrous insertion into protoporphyrin IX. In Escherichia coli O127:H6 (strain E2348/69 / EPEC), this protein is Ferrochelatase.